The chain runs to 440 residues: Putative epoxide hydrolase (440 aa).

The segment at 1–21 (MTKTLAEQPGEGAAPVSPSPS) is disordered. Residues 1–49 (MTKTLAEQPGEGAAPVSPSPSRRALLHGAAGLGALAAGAAVAGPGLAFA) constitute a signal peptide (tat-type signal).

The protein belongs to the peptidase S33 family. In terms of processing, predicted to be exported by the Tat system. The position of the signal peptide cleavage has not been experimentally proven.

The catalysed reaction is an epoxide + H2O = an ethanediol. In Stigmatella aurantiaca (strain DW4/3-1), this protein is Putative epoxide hydrolase.